We begin with the raw amino-acid sequence, 122 residues long: Small ribosomal subunit protein uS13 (122 aa).

Residues 95–122 (GLPVRGQRTKTNARTRKGPKKTIAGKKK) are disordered.

The protein belongs to the universal ribosomal protein uS13 family. In terms of assembly, part of the 30S ribosomal subunit. Forms a loose heterodimer with protein S19. Forms two bridges to the 50S subunit in the 70S ribosome.

Its function is as follows. Located at the top of the head of the 30S subunit, it contacts several helices of the 16S rRNA. In the 70S ribosome it contacts the 23S rRNA (bridge B1a) and protein L5 of the 50S subunit (bridge B1b), connecting the 2 subunits; these bridges are implicated in subunit movement. Contacts the tRNAs in the A and P-sites. The sequence is that of Small ribosomal subunit protein uS13 from Corynebacterium glutamicum (strain ATCC 13032 / DSM 20300 / JCM 1318 / BCRC 11384 / CCUG 27702 / LMG 3730 / NBRC 12168 / NCIMB 10025 / NRRL B-2784 / 534).